The following is a 950-amino-acid chain: Leucine--tRNA ligase 2 (950 aa).

Residues 47 to 57 carry the 'HIGH' region motif; sequence PYPNSPFHLGH. A 'KMSKS' region motif is present at residues 631–635; it reads KMSKS. Residue Lys-634 coordinates ATP.

This sequence belongs to the class-I aminoacyl-tRNA synthetase family.

Its subcellular location is the cytoplasm. It catalyses the reaction tRNA(Leu) + L-leucine + ATP = L-leucyl-tRNA(Leu) + AMP + diphosphate. The protein is Leucine--tRNA ligase 2 of Metallosphaera sedula (strain ATCC 51363 / DSM 5348 / JCM 9185 / NBRC 15509 / TH2).